Reading from the N-terminus, the 437-residue chain is Acyl-coenzyme A thioesterase 2, chloroplastic (437 aa).

A chloroplast-targeting transit peptide spans 1 to 13; the sequence is MDLSSSPNHPITV. 2 consecutive HotDog ACOT-type domains span residues 89 to 211 and 287 to 404; these read ILYN…RDSK and RDTR…RPEA.

This sequence belongs to the acyl coenzyme A hydrolase family. As to expression, mostly expressed at low levels in glandular trichomes (lupulin glands), and, to a lower extent, in stems, leaves, flowers and cones.

It is found in the plastid. The protein localises to the chloroplast. Its function is as follows. Acyl-CoA thioesterases are a group of enzymes that catalyze the hydrolysis of acyl-CoAs to the free fatty acid and coenzyme A (CoASH), providing the potential to regulate intracellular levels of acyl-CoAs, free fatty acids and CoASH. This chain is Acyl-coenzyme A thioesterase 2, chloroplastic, found in Humulus lupulus (European hop).